Reading from the N-terminus, the 20-residue chain is Unknown protein NF019 from 2D-PAGE (20 aa).

The chain is Unknown protein NF019 from 2D-PAGE from Naegleria fowleri (Brain eating amoeba).